The following is a 398-amino-acid chain: Histidinol-phosphate aminotransferase (398 aa).

Over residues 1–10 (MTGQRATPQP) the composition is skewed to polar residues. The disordered stretch occupies residues 1 to 30 (MTGQRATPQPTLDDLPLRDDLRGKSPYGAP). Position 234 is an N6-(pyridoxal phosphate)lysine (Lys-234).

This sequence belongs to the class-II pyridoxal-phosphate-dependent aminotransferase family. Histidinol-phosphate aminotransferase subfamily. As to quaternary structure, homodimer. Requires pyridoxal 5'-phosphate as cofactor.

The catalysed reaction is L-histidinol phosphate + 2-oxoglutarate = 3-(imidazol-4-yl)-2-oxopropyl phosphate + L-glutamate. The protein operates within amino-acid biosynthesis; L-histidine biosynthesis; L-histidine from 5-phospho-alpha-D-ribose 1-diphosphate: step 7/9. This Mycolicibacterium paratuberculosis (strain ATCC BAA-968 / K-10) (Mycobacterium paratuberculosis) protein is Histidinol-phosphate aminotransferase.